The following is a 319-amino-acid chain: Protease HtpX homolog (319 aa).

2 helical membrane-spanning segments follow: residues 6–26 (TAML…VIGG) and 28–48 (GGMM…YWNS). Histidine 130 contacts Zn(2+). Residue glutamate 131 is part of the active site. Histidine 134 contacts Zn(2+). The next 2 membrane-spanning stretches (helical) occupy residues 145–165 (MTAT…FFGG) and 172–192 (PLGF…AALV). Glutamate 201 lines the Zn(2+) pocket. The segment at 280-319 (EMSTGSTAPVRPDNAVRKSRSVPRTGWGRGGSEPPKGPWS) is disordered.

Belongs to the peptidase M48B family. Requires Zn(2+) as cofactor.

The protein resides in the cell inner membrane. The polypeptide is Protease HtpX homolog (Sinorhizobium medicae (strain WSM419) (Ensifer medicae)).